The sequence spans 102 residues: Plastocyanin (102 aa).

The 102-residue stretch at 1 to 102 (AKVEVGDEVG…ANMKGTLTVK (102 aa)) folds into the Plastocyanin-like domain. Residues His-37, Cys-87, His-90, and Met-95 each coordinate Cu cation.

This sequence belongs to the plastocyanin family. The cofactor is Cu(2+).

The protein localises to the plastid. The protein resides in the chloroplast thylakoid membrane. Its function is as follows. Participates in electron transfer between P700 and the cytochrome b6-f complex in photosystem I. The protein is Plastocyanin (PETE) of Dryopteris crassirhizoma (Thick stemmed wood fern).